Reading from the N-terminus, the 136-residue chain is Large ribosomal subunit protein uL16c (136 aa).

Belongs to the universal ribosomal protein uL16 family. Part of the 50S ribosomal subunit.

The protein localises to the plastid. It is found in the chloroplast. This Chloranthus spicatus (Chulantree) protein is Large ribosomal subunit protein uL16c.